Here is a 187-residue protein sequence, read N- to C-terminus: Large ribosomal subunit protein uL5 (187 aa).

Belongs to the universal ribosomal protein uL5 family. In terms of assembly, part of the 50S ribosomal subunit; part of the 5S rRNA/L5/L18/L25 subcomplex. Contacts the 5S rRNA and the P site tRNA. Forms a bridge to the 30S subunit in the 70S ribosome.

In terms of biological role, this is one of the proteins that bind and probably mediate the attachment of the 5S RNA into the large ribosomal subunit, where it forms part of the central protuberance. In the 70S ribosome it contacts protein S13 of the 30S subunit (bridge B1b), connecting the 2 subunits; this bridge is implicated in subunit movement. Contacts the P site tRNA; the 5S rRNA and some of its associated proteins might help stabilize positioning of ribosome-bound tRNAs. In Gluconobacter oxydans (strain 621H) (Gluconobacter suboxydans), this protein is Large ribosomal subunit protein uL5.